The chain runs to 329 residues: Mas-related G-protein coupled receptor member X2 (329 aa).

The Extracellular segment spans residues 1–33 (MDPTTPAWGTESTTMDGNDQSLPLLCDKEALIP). A helical transmembrane segment spans residues 34 to 54 (VFLILFIALVGLVGNGFVLWL). Topologically, residues 55–63 (LGFRMSRNA) are cytoplasmic. Residues 64 to 84 (FSVYVLSLAGADFLFLCFQII) form a helical membrane-spanning segment. Residues 85-96 (NCLVYLRDFFCS) lie on the Extracellular side of the membrane. The helical transmembrane segment at 97–117 (ISINFPSXFTTVMTCAYLAGL) threads the bilayer. Residues 118 to 144 (SMLSTISTERCLSVLWPIWYRCRRPRH) lie on the Cytoplasmic side of the membrane. A helical transmembrane segment spans residues 145 to 165 (LSAVVCVLLWALSLLLSILEG). The Extracellular segment spans residues 166 to 184 (KFCGFLFSDGDFGWCQIFD). A helical transmembrane segment spans residues 185–205 (FITAAWLIFLFVVLCASSLAL). The Cytoplasmic portion of the chain corresponds to 206 to 228 (LVRILCGSRGLPLTRLYLTILLT). A helical membrane pass occupies residues 229–249 (VLVFLLCGLPFGIQWFLILGF). Over 250–263 (WNSDVLLCHIHLVS) the chain is Extracellular. A helical transmembrane segment spans residues 264-284 (VVLSSLNSSANPIIYFFVGSF). The Cytoplasmic portion of the chain corresponds to 285–329 (RKQWRLQQPILKLAFQRALQDTAEVDHSEGCFPQGTSEMSRSSLV).

The protein belongs to the G-protein coupled receptor 1 family. Mas subfamily.

Its subcellular location is the cell membrane. In terms of biological role, mast cell-specific receptor for basic secretagogues, i.e. cationic amphiphilic drugs, as well as endo- or exogenous peptides, consisting of a basic head group and a hydrophobic core. Recognizes and binds small molecules containing a cyclized tetrahydroisoquinoline (THIQ), such as non-steroidal neuromuscular blocking drugs (NMBDs), including tubocurarine and atracurium. In response to these compounds, mediates pseudo-allergic reactions characterized by histamine release, inflammation and airway contraction. The sequence is that of Mas-related G-protein coupled receptor member X2 (MRGPRX2) from Hoolock hoolock (Western hoolock gibbon).